Reading from the N-terminus, the 275-residue chain is MTDDKDVLRDVWFGRIPTCFTLYQDEITEREAEPYYLLLPRVSYLTLVTDKVKKHFQKVMRQEDISEIWFEYEGTPLKWHYPIGLLFDLLASSSALPWNITVHFKSFPEKDLLHCPSKDVIEAHFMSCVKEADALKHKSQVINEMQKKDHKQLWMGLQNDRFDQFWAINRKLMEYPAEENGFRYIPFRIYQTTTERPFIQKLFRPVSTDGQLHTLGDLLKEVCPSAVAPEDGEKKNQVMIHGIEPMLETPLQWLSEHLSYPDNFLHISIIPQPTD.

An N-acetylmethionine modification is found at methionine 1. Lysine 130 participates in a covalent cross-link: Glycyl lysine isopeptide (Lys-Gly) (interchain with G-Cter in ATG12).

The protein belongs to the ATG5 family. As to quaternary structure, forms a conjugate with ATG12. Part of the minor complex composed of 4 sets of ATG12-ATG5 and ATG16L1 (400 kDa); this complex interacts with ATG3 leading to disruption of ATG7 interaction and promotion of ATG8-like proteins lipidation. Forms an 800-kDa complex composed of ATG12-ATG5 and ATG16L2. The ATG12-ATG5 conjugate interacts with RAB33A; this interaction is bridged by ATG16L1 and promotes ATG12-ATG5-ATG16L1 complex recruitment to phagophores. Interacts with TECPR1; the interaction is direct and does not take place when ATG16L1 is associated with the ATG5-ATG12 conjugate. Interacts with DHX58/RIG-1, IFIH1/MDA5 and MAVS/IPS-1 in monomeric form as well as in ATG12-ATG5 conjugate form. The interaction with MAVS is further enhanced upon vesicular stomatitis virus (VSV) infection. Interacts with ATG3. Interacts with ATG7 and ATG10. Interacts with FADD. Interacts with Bassoon/BSN; this interaction is important for the regulation of presynaptic autophagy. Interacts with ATG16L2. In terms of processing, conjugated to ATG12; which is essential for autophagy, but is not required for association with isolation membrane. Acetylated by EP300.

It is found in the cytoplasm. The protein localises to the preautophagosomal structure membrane. Functionally, involved in autophagic vesicle formation. Conjugation with ATG12, through a ubiquitin-like conjugating system involving ATG7 as an E1-like activating enzyme and ATG10 as an E2-like conjugating enzyme, is essential for its function. The ATG12-ATG5 conjugate acts as an E3-like enzyme which is required for lipidation of ATG8 family proteins and their association to the vesicle membranes. Involved in mitochondrial quality control after oxidative damage, and in subsequent cellular longevity. Plays a critical role in multiple aspects of lymphocyte development and is essential for both B and T lymphocyte survival and proliferation. Required for optimal processing and presentation of antigens for MHC II. Involved in the maintenance of axon morphology and membrane structures, as well as in normal adipocyte differentiation. Promotes primary ciliogenesis through removal of OFD1 from centriolar satellites and degradation of IFT20 via the autophagic pathway. As part of the ATG8 conjugation system with ATG12 and ATG16L1, required for recruitment of LRRK2 to stressed lysosomes and induction of LRRK2 kinase activity in response to lysosomal stress. In terms of biological role, may play an important role in the apoptotic process, possibly within the modified cytoskeleton. Its expression is a relatively late event in the apoptotic process, occurring downstream of caspase activity. Plays a crucial role in IFN-gamma-induced autophagic cell death by interacting with FADD. The chain is Autophagy protein 5 from Bos taurus (Bovine).